A 782-amino-acid polypeptide reads, in one-letter code: General transcription and DNA repair factor IIH helicase/translocase subunit XPB (782 aa).

A compositionally biased stretch (basic and acidic residues) spans 1-11; sequence MGKRDRADRDK. 2 disordered regions span residues 1 to 51 and 218 to 241; these read MGKR…ESGT and SAISKTAESSGGPSTSRVTDPQGK. The short motif at 6–18 is the Nuclear localization signal element; the sequence is RADRDKKKSRKRH. A compositionally biased stretch (acidic residues) spans 21-30; the sequence is DEEDDEEDAP. The span at 218–236 shows a compositional bias: polar residues; it reads SAISKTAESSGGPSTSRVT. The Helicase ATP-binding domain maps to 327-488; that stretch reads MFGNGRARSG…DLNFLIGPKL (162 aa). ATP is bound at residue 340 to 347; sequence LPCGAGKS. Positions 441–444 match the DEVH box motif; it reads DEVH. The 161-residue stretch at 542–702 folds into the Helicase C-terminal domain; the sequence is RACQFLIKFH…LAGMEEEDLA (161 aa). Phosphoserine is present on Ser-686. At Ser-751 the chain carries Phosphoserine; by CK2.

This sequence belongs to the helicase family. RAD25/XPB subfamily. In terms of assembly, component of the 7-subunit TFIIH core complex composed of XPB/ERCC3, XPD/ERCC2, GTF2H1, GTF2H2, GTF2H3, GTF2H4 and GTF2H5, which is active in NER. The core complex associates with the 3-subunit CDK-activating kinase (CAK) module composed of CCNH/cyclin H, CDK7 and MNAT1 to form the 10-subunit holoenzyme (holo-TFIIH) active in transcription. Interacts with PUF60. Interacts with ATF7IP. Interacts with KAT2A; leading to KAT2A recruitment to promoters and acetylation of histones. Part of TBP-based Pol II pre-initiation complex (PIC), in which Pol II core assembles with general transcription factors and other specific initiation factors including GTF2E1, GTF2E2, GTF2F1, GTF2F2, TCEA1, ERCC2, ERCC3, GTF2H2, GTF2H3, GTF2H4, GTF2H5, GTF2A1, GTF2A2, GTF2B and TBP; this large multi-subunit PIC complex mediates DNA unwinding and targets Pol II core to the transcription start site where the first phosphodiester bond forms. Phosphorylation on Ser-751 by CK2 controls the 5'-excision activity of ERCC1-XPF endonuclease; phosphorylated protein inhibits the excision activity and thus NER. Dephosphorylation reactivates the 5'-excision step. Phosphorylation has no effect on transcription or the 3'-5' helicase activity.

It localises to the nucleus. It carries out the reaction Couples ATP hydrolysis with the unwinding of duplex DNA by translocating in the 3'-5' direction.. It catalyses the reaction ATP + H2O = ADP + phosphate + H(+). Phosphorylation on Ser-751 by CK2 controls the 5'-excision activity of ERCC1-XPF endonuclease; phosphorylated protein inhibits the excision activity and thus NER. ATPase activity is stimulated by TFIIH subunit p52 (GTF2H4). DNA translocase activity by this subunit in TFIIH is stimulated by XPA, ERCC5/XPG and XFP plus ERCC1. In terms of biological role, ATP-dependent 3'-5' DNA helicase/translocase; binds dsDNA rather than ssDNA, unzipping it in a translocase rather than classical helicase activity. Component of the general transcription and DNA repair factor IIH (TFIIH) core complex. When complexed to CDK-activating kinase (CAK), involved in RNA transcription by RNA polymerase II. The ATPase activity of XPB/ERCC3, but not its helicase activity, is required for DNA opening; it may wrap around the damaged DNA wedging it open, causing localized melting and twisting that allows XPD/ERCC2 helicase to anchor. The ATP-dependent helicase activity of XPB/ERCC3 may be required for promoter escape. Also involved in transcription-coupled nucleotide excision repair (NER) of damaged DNA. In NER, TFIIH acts by opening DNA around the lesion to allow the excision of the damaged oligonucleotide and its replacement by a new DNA fragment. The structure of the TFIIH transcription complex differs from the NER-TFIIH complex; large movements by XPD/ERCC2 and XPB/ERCC3 are stabilized by XPA. This chain is General transcription and DNA repair factor IIH helicase/translocase subunit XPB (ERCC3), found in Pongo abelii (Sumatran orangutan).